Reading from the N-terminus, the 303-residue chain is Coenzyme PQQ synthesis protein B (303 aa).

This sequence belongs to the PqqB family.

Its pathway is cofactor biosynthesis; pyrroloquinoline quinone biosynthesis. Its function is as follows. May be involved in the transport of PQQ or its precursor to the periplasm. This chain is Coenzyme PQQ synthesis protein B, found in Pseudomonas savastanoi pv. phaseolicola (strain 1448A / Race 6) (Pseudomonas syringae pv. phaseolicola (strain 1448A / Race 6)).